The primary structure comprises 185 residues: dCTP deaminase (185 aa).

DCTP is bound by residues Lys-107–Arg-112, Thr-131–Glu-133, Gln-152, Tyr-166, and Gln-176. Glu-133 acts as the Proton donor/acceptor in catalysis.

This sequence belongs to the dCTP deaminase family. Homotrimer.

It carries out the reaction dCTP + H2O + H(+) = dUTP + NH4(+). It participates in pyrimidine metabolism; dUMP biosynthesis; dUMP from dCTP (dUTP route): step 1/2. Catalyzes the deamination of dCTP to dUTP. This chain is dCTP deaminase, found in Neorickettsia sennetsu (strain ATCC VR-367 / Miyayama) (Ehrlichia sennetsu).